The following is a 170-amino-acid chain: MASLFASLGRSLIKLLIVLPVIIGLSISSPAMAAQWDAETLTVPAGSGGQQVTFTESEIKSASKLFKSNCATCHNQGVTKTNQNVGLDLEALSLASPARDNVDGLVEFLKNPMSYDGEYSIADTHPGISSSDVYVQMRTLNDEDLRLIAGYILTAEKVQGDQWGGGKIYF.

Residues 1 to 33 (MASLFASLGRSLIKLLIVLPVIIGLSISSPAMA) form the signal peptide. The heme c site is built by Cys-70, Cys-73, His-74, and His-125.

The protein belongs to the cytochrome c family. PsbV subfamily. PSII is composed of 1 copy each of membrane proteins PsbA, PsbB, PsbC, PsbD, PsbE, PsbF, PsbH, PsbI, PsbJ, PsbK, PsbL, PsbM, PsbT, PsbX, PsbY, Psb30/Ycf12, peripheral proteins PsbO, CyanoQ (PsbQ), PsbU, PsbV and a large number of cofactors. It forms dimeric complexes. Requires heme c as cofactor.

The protein resides in the cellular thylakoid membrane. One of the extrinsic, lumenal subunits of photosystem II (PSII). PSII is a light-driven water plastoquinone oxidoreductase, using light energy to abstract electrons from H(2)O, generating a proton gradient subsequently used for ATP formation. The extrinsic proteins stabilize the structure of photosystem II oxygen-evolving complex (OEC), the ion environment of oxygen evolution and protect the OEC against heat-induced inactivation. Low-potential cytochrome c that plays a role in the OEC of PSII. The chain is Photosystem II extrinsic protein V from Prochlorococcus marinus (strain MIT 9313).